The sequence spans 116 residues: Large ribosomal subunit protein uL18 (116 aa).

It belongs to the universal ribosomal protein uL18 family. As to quaternary structure, part of the 50S ribosomal subunit; part of the 5S rRNA/L5/L18/L25 subcomplex. Contacts the 5S and 23S rRNAs.

In terms of biological role, this is one of the proteins that bind and probably mediate the attachment of the 5S RNA into the large ribosomal subunit, where it forms part of the central protuberance. The sequence is that of Large ribosomal subunit protein uL18 from Acinetobacter baumannii (strain AB307-0294).